We begin with the raw amino-acid sequence, 520 residues long: Fusaridione A cluster transcription factor fsdR (520 aa).

A disordered region spans residues 1–30 (MSTGPPSGISLVSMTTPRKSGQHTPESWSK).

The protein resides in the nucleus. Functionally, transcription factor that regulates the expression of the gene cluster that mediates the biosynthesis of fusaridione A. The chain is Fusaridione A cluster transcription factor fsdR from Fusarium heterosporum.